The sequence spans 288 residues: Ras-like protein 1 (288 aa).

Glycine 11–serine 18 lines the GTP pocket. Positions tyrosine 33–tyrosine 41 match the Effector region motif. Residues aspartate 58–glutamine 62 and asparagine 117–aspartate 120 contribute to the GTP site. The interval glutamate 176–valine 288 is disordered. 2 stretches are compositionally biased toward low complexity: residues glutamine 178–asparagine 216 and proline 246–lysine 281. Cysteine 284 carries S-palmitoyl cysteine lipidation. Cysteine methyl ester is present on cysteine 285. Cysteine 285 is lipidated: S-farnesyl cysteine. The propeptide at valine 286–valine 288 is removed in mature form.

Belongs to the small GTPase superfamily. Ras family.

The protein localises to the cell membrane. The catalysed reaction is GTP + H2O = GDP + phosphate + H(+). With respect to regulation, alternates between an inactive form bound to GDP and an active form bound to GTP. Activated by a guanine nucleotide-exchange factor (GEF) and inactivated by a GTPase-activating protein (GAP). Its function is as follows. Required for the regulation of both a MAP kinase signaling pathway and a cAMP signaling pathway. The activation of these pathways contributes to the pathogenicity of the cells through the induction of the morphological transition from the yeast to the polarized filamentous form. The protein is Ras-like protein 1 (RAS1) of Candida albicans (strain WO-1) (Yeast).